The following is a 247-amino-acid chain: DNA-directed RNA polymerase subunit Rpo3 (247 aa).

This sequence belongs to the archaeal Rpo3/eukaryotic RPB3 RNA polymerase subunit family. As to quaternary structure, part of the RNA polymerase complex.

The protein localises to the cytoplasm. It carries out the reaction RNA(n) + a ribonucleoside 5'-triphosphate = RNA(n+1) + diphosphate. Its function is as follows. DNA-dependent RNA polymerase (RNAP) catalyzes the transcription of DNA into RNA using the four ribonucleoside triphosphates as substrates. The polypeptide is DNA-directed RNA polymerase subunit Rpo3 (Natronomonas pharaonis (strain ATCC 35678 / DSM 2160 / CIP 103997 / JCM 8858 / NBRC 14720 / NCIMB 2260 / Gabara) (Halobacterium pharaonis)).